The following is a 1977-amino-acid chain: Protein rotatin homolog (1977 aa).

The disordered stretch occupies residues 141–166 (SVSSLSSNDIPSQATESADSSSNQIY).

Belongs to the rotatin family. Interacts with Rcd4;this complex is recruited to daughter centrioles before their conversion to centrosomes.

The protein localises to the cytoplasm. The protein resides in the cytoskeleton. Its subcellular location is the microtubule organizing center. It localises to the centrosome. It is found in the centriole. Participes in the structural integrity of both centrioles and basal bodies and in centriole cohesion. Participates in the later stages of centriole assembly through the interaction with Rcd4 leading to the centriole to centrosome conversion. The chain is Protein rotatin homolog from Drosophila melanogaster (Fruit fly).